Consider the following 325-residue polypeptide: Glycerol-3-phosphate dehydrogenase [NAD(P)+] (325 aa).

Ser14, Phe15, Arg35, and Lys109 together coordinate NADPH. Residues Lys109 and Gly137 each contribute to the sn-glycerol 3-phosphate site. Ala141 serves as a coordination point for NADPH. Sn-glycerol 3-phosphate contacts are provided by Lys192, Asp247, Ser257, Arg258, and Asn259. The active-site Proton acceptor is the Lys192. Arg258 is an NADPH binding site. Residues Leu282 and Glu284 each coordinate NADPH.

It belongs to the NAD-dependent glycerol-3-phosphate dehydrogenase family.

Its subcellular location is the cytoplasm. It catalyses the reaction sn-glycerol 3-phosphate + NAD(+) = dihydroxyacetone phosphate + NADH + H(+). The catalysed reaction is sn-glycerol 3-phosphate + NADP(+) = dihydroxyacetone phosphate + NADPH + H(+). Its pathway is membrane lipid metabolism; glycerophospholipid metabolism. Functionally, catalyzes the reduction of the glycolytic intermediate dihydroxyacetone phosphate (DHAP) to sn-glycerol 3-phosphate (G3P), the key precursor for phospholipid synthesis. In Rickettsia africae (strain ESF-5), this protein is Glycerol-3-phosphate dehydrogenase [NAD(P)+].